The primary structure comprises 107 residues: Phosphoribosyl-ATP pyrophosphatase (107 aa).

It belongs to the PRA-PH family.

The protein resides in the cytoplasm. It carries out the reaction 1-(5-phospho-beta-D-ribosyl)-ATP + H2O = 1-(5-phospho-beta-D-ribosyl)-5'-AMP + diphosphate + H(+). It participates in amino-acid biosynthesis; L-histidine biosynthesis; L-histidine from 5-phospho-alpha-D-ribose 1-diphosphate: step 2/9. The polypeptide is Phosphoribosyl-ATP pyrophosphatase (Bacillus cereus (strain G9842)).